Reading from the N-terminus, the 264-residue chain is uncharacterized protein (264 aa).

This is an uncharacterized protein from Bacillus subtilis (strain 168).